We begin with the raw amino-acid sequence, 607 residues long: ATP-dependent rRNA helicase SPB4 (607 aa).

A Q motif motif is present at residues 7-35 (WDDLEYPIQPWIRSAVDVMGFENMTPVQA). The Helicase ATP-binding domain maps to 38–224 (IPLFARNKDV…KTGLRNPVKV (187 aa)). ATP is bound at residue 51–58 (SVTGSGKT). Residues 172–175 (DEAD) carry the DEAD box motif. One can recognise a Helicase C-terminal domain in the interval 248 to 404 (KLEQVISIIN…EISLDIVNLP (157 aa)). The segment at 527–607 (KSELKKKNMS…NGMQGSFDDL (81 aa)) is disordered. Positions 529-565 (ELKKKNMSWSNNTQSKEEKVERRTKMALKRKRIEEEL) form a coiled coil. Composition is skewed to basic and acidic residues over residues 543-552 (SKEEKVERRT) and 560-570 (RIEEELSKEAD). Residues 587-601 (ILQNKKSKNSNNGMQ) show a composition bias toward polar residues.

The protein belongs to the DEAD box helicase family. DDX55/SPB4 subfamily. In terms of assembly, component of pre-60S ribosomal complexes.

It localises to the nucleus. Its subcellular location is the nucleolus. The enzyme catalyses ATP + H2O = ADP + phosphate + H(+). ATP-binding RNA helicase involved in the biogenesis of 60S ribosomal subunits. Binds 90S pre-ribosomal particles and dissociates from pre-60S ribosomal particles after processing of 27SB pre-rRNA. Required for the normal formation of 18S rRNA through the processing of pre-rRNAs at sites A0, A1 and A2, and the normal formation of 25S and 5.8S rRNAs through the processing of pre-rRNAs at sites C1 and C2. The polypeptide is ATP-dependent rRNA helicase SPB4 (Vanderwaltozyma polyspora (strain ATCC 22028 / DSM 70294 / BCRC 21397 / CBS 2163 / NBRC 10782 / NRRL Y-8283 / UCD 57-17) (Kluyveromyces polysporus)).